Reading from the N-terminus, the 356-residue chain is Cyclin-D2-2 (356 aa).

Residues 325-343 show a composition bias toward polar residues; sequence LGSSQSNSNNKDYNSQDSA. Positions 325-356 are disordered; it reads LGSSQSNSNNKDYNSQDSAPASKRRRLNTTPI. Over residues 346 to 356 the composition is skewed to basic residues; the sequence is SKRRRLNTTPI.

The protein belongs to the cyclin family. Cyclin D subfamily.

This Oryza sativa subsp. japonica (Rice) protein is Cyclin-D2-2 (CYCD2-2).